The chain runs to 541 residues: Tyrosine-protein kinase Yes (541 aa).

Gly2 carries the N-myristoyl glycine lipid modification. Residue Cys3 is the site of S-palmitoyl cysteine; in membrane form attachment. Position 32 is a phosphotyrosine (Tyr32). Residues 89–150 (GGVTIFVALY…PSNYVVPADS (62 aa)) enclose the SH3 domain. Residues 156–253 (WYFGKMGRKD…GLCHKLTTVC (98 aa)) enclose the SH2 domain. The Protein kinase domain occupies 275–528 (LRLEVKLGQG…YIQSFLEDYF (254 aa)). ATP is bound by residues 281 to 289 (LGQGCFGEV) and Lys303. Phosphotyrosine is present on residues Tyr334 and Tyr343. Asp394 (proton acceptor) is an active-site residue. Tyr424 is subject to Phosphotyrosine; by autocatalysis. Tyr535 is modified (phosphotyrosine).

Belongs to the protein kinase superfamily. Tyr protein kinase family. SRC subfamily. Interacts with YAP1. Interacts with FASLG. Interacts with CTNND1; this interaction allows YES1-mediated activation of FYN and FER and subsequent phosphorylation of CTNND1. Interacts with CSF1R. Interacts with IL6ST/gp130. Interacts with SCRIB, when YES1 is in a closed conformation; the interaction facilitates YES1 autophosphorylation. Phosphorylated. Phosphorylation by CSK on the C-terminal tail maintains the enzyme in an inactive state. Autophosphorylation at Tyr-424 maintains enzyme activity by blocking CSK-mediated inhibition. Post-translationally, palmitoylation at Cys-3 promotes membrane localization.

The protein resides in the cell membrane. The protein localises to the cytoplasm. Its subcellular location is the cytoskeleton. It localises to the microtubule organizing center. It is found in the centrosome. The protein resides in the cytosol. The protein localises to the cell junction. The catalysed reaction is L-tyrosyl-[protein] + ATP = O-phospho-L-tyrosyl-[protein] + ADP + H(+). Functionally, non-receptor protein tyrosine kinase that is involved in the regulation of cell growth and survival, apoptosis, cell-cell adhesion, cytoskeleton remodeling, and differentiation. Stimulation by receptor tyrosine kinases (RTKs) including EGFR, PDGFR, CSF1R and FGFR leads to recruitment of YES1 to the phosphorylated receptor, and activation and phosphorylation of downstream substrates. Upon EGFR activation, promotes the phosphorylation of PARD3 to favor epithelial tight junction assembly. Participates in the phosphorylation of specific junctional components such as CTNND1 by stimulating the FYN and FER tyrosine kinases at cell-cell contacts. Upon T-cell stimulation by CXCL12, phosphorylates collapsin response mediator protein 2/DPYSL2 and induces T-cell migration. Participates in CD95L/FASLG signaling pathway and mediates AKT-mediated cell migration. Plays a role in cell cycle progression by phosphorylating the cyclin dependent kinase 4/CDK4 thus regulating the G1 phase. Also involved in G2/M progression and cytokinesis. Catalyzes phosphorylation of organic cation transporter OCT2 which induces its transport activity. This is Tyrosine-protein kinase Yes (Yes1) from Mus musculus (Mouse).